We begin with the raw amino-acid sequence, 131 residues long: Sec-independent protein translocase protein TatB (131 aa).

The helical transmembrane segment at 2 to 22 (FANIGWWEMLVLVMVGLVVLG) threads the bilayer. The interval 90–131 (DSLFTGDFDRPTPKKPDAAGSAGPDATEQIGAGPIPFDSDAT) is disordered. Basic and acidic residues predominate over residues 96-106 (DFDRPTPKKPD).

It belongs to the TatB family. As to quaternary structure, the Tat system comprises two distinct complexes: a TatABC complex, containing multiple copies of TatA, TatB and TatC subunits, and a separate TatA complex, containing only TatA subunits. Substrates initially bind to the TatABC complex, which probably triggers association of the separate TatA complex to form the active translocon.

Its subcellular location is the cell membrane. Functionally, part of the twin-arginine translocation (Tat) system that transports large folded proteins containing a characteristic twin-arginine motif in their signal peptide across membranes. Together with TatC, TatB is part of a receptor directly interacting with Tat signal peptides. TatB may form an oligomeric binding site that transiently accommodates folded Tat precursor proteins before their translocation. The protein is Sec-independent protein translocase protein TatB of Mycobacterium tuberculosis (strain ATCC 25177 / H37Ra).